A 281-amino-acid polypeptide reads, in one-letter code: 4-diphosphocytidyl-2-C-methyl-D-erythritol kinase (281 aa).

Lys-11 is an active-site residue. 92-102 lines the ATP pocket; it reads LVSAGLAGGSA. Residue Asp-132 is part of the active site.

Belongs to the GHMP kinase family. IspE subfamily.

The catalysed reaction is 4-CDP-2-C-methyl-D-erythritol + ATP = 4-CDP-2-C-methyl-D-erythritol 2-phosphate + ADP + H(+). The protein operates within isoprenoid biosynthesis; isopentenyl diphosphate biosynthesis via DXP pathway; isopentenyl diphosphate from 1-deoxy-D-xylulose 5-phosphate: step 3/6. In terms of biological role, catalyzes the phosphorylation of the position 2 hydroxy group of 4-diphosphocytidyl-2C-methyl-D-erythritol. This is 4-diphosphocytidyl-2-C-methyl-D-erythritol kinase from Ehrlichia ruminantium (strain Welgevonden).